Reading from the N-terminus, the 540-residue chain is Chaperonin GroEL 2 (540 aa).

Residues 29-32 (TLGP), 86-90 (DGTTT), Gly-413, and Asp-492 contribute to the ATP site. Positions 521–540 (KPEKEKASVPGGGDMGGMDF) are disordered. Residues 530 to 540 (PGGGDMGGMDF) are compositionally biased toward gly residues.

Belongs to the chaperonin (HSP60) family. Forms a cylinder of 14 subunits composed of two heptameric rings stacked back-to-back. Interacts with the co-chaperonin GroES.

It localises to the secreted. It is found in the capsule. The protein resides in the cell surface. The protein localises to the cell wall. It catalyses the reaction ATP + H2O + a folded polypeptide = ADP + phosphate + an unfolded polypeptide.. Together with its co-chaperonin GroES, plays an essential role in assisting protein folding. The GroEL-GroES system forms a nano-cage that allows encapsulation of the non-native substrate proteins and provides a physical environment optimized to promote and accelerate protein folding. The protein is Chaperonin GroEL 2 of Mycobacterium tuberculosis (strain ATCC 25177 / H37Ra).